Reading from the N-terminus, the 297-residue chain is Mitochondrial thiamine pyrophosphate carrier 1 (297 aa).

3 Solcar repeats span residues 13-94, 102-195, and 196-295; these read SHVF…TNAA, PPTI…IRAR, and WPET…LMRV. Transmembrane regions (helical) follow at residues 19–36, 75–91, 109–128, 163–187, 203–219, and 270–287; these read LVSG…IAPL, IMYI…YSYT, LAGA…FDVL, GLGG…AMFG, TAGA…TFPL, and GIGL…INLW.

The protein belongs to the mitochondrial carrier (TC 2.A.29) family.

Its subcellular location is the mitochondrion inner membrane. Mitochondrial transporter that mediates uptake of thiamine pyrophosphate (ThPP) into mitochondria. The polypeptide is Mitochondrial thiamine pyrophosphate carrier 1 (TPC1) (Vanderwaltozyma polyspora (strain ATCC 22028 / DSM 70294 / BCRC 21397 / CBS 2163 / NBRC 10782 / NRRL Y-8283 / UCD 57-17) (Kluyveromyces polysporus)).